We begin with the raw amino-acid sequence, 111 residues long: Stress-response A/B barrel domain-containing protein At5g22580 (111 aa).

The 93-residue stretch at 6–98 (FKHLVVVKFK…VIDKIVLLDF (93 aa)) folds into the Stress-response A/B barrel domain. Mg(2+)-binding residues include Val31, Ile34, Asp35, and Val37.

In terms of assembly, homodimer. Mg(2+) is required as a cofactor.

Its function is as follows. Involved in stress response. The polypeptide is Stress-response A/B barrel domain-containing protein At5g22580 (Arabidopsis thaliana (Mouse-ear cress)).